We begin with the raw amino-acid sequence, 337 residues long: Anthranilate phosphoribosyltransferase (337 aa).

Residues Gly-78, 81–82, Thr-86, 88–91, 106–114, and Ser-118 each bind 5-phospho-alpha-D-ribose 1-diphosphate; these read GD, NIST, and KHGNRSVSS. Gly-78 contacts anthranilate. Ser-90 serves as a coordination point for Mg(2+). Asn-109 is a binding site for anthranilate. Position 164 (Arg-164) interacts with anthranilate. 2 residues coordinate Mg(2+): Asp-222 and Glu-223.

The protein belongs to the anthranilate phosphoribosyltransferase family. In terms of assembly, homodimer. It depends on Mg(2+) as a cofactor.

It catalyses the reaction N-(5-phospho-beta-D-ribosyl)anthranilate + diphosphate = 5-phospho-alpha-D-ribose 1-diphosphate + anthranilate. It functions in the pathway amino-acid biosynthesis; L-tryptophan biosynthesis; L-tryptophan from chorismate: step 2/5. Functionally, catalyzes the transfer of the phosphoribosyl group of 5-phosphorylribose-1-pyrophosphate (PRPP) to anthranilate to yield N-(5'-phosphoribosyl)-anthranilate (PRA). The sequence is that of Anthranilate phosphoribosyltransferase from Idiomarina loihiensis (strain ATCC BAA-735 / DSM 15497 / L2-TR).